The following is a 424-amino-acid chain: Methylenetetrahydrofolate--tRNA-(uracil-5-)-methyltransferase TrmFO 1 (424 aa).

8-13 (GAGLSG) contributes to the FAD binding site.

Belongs to the MnmG family. TrmFO subfamily. FAD is required as a cofactor.

It localises to the cytoplasm. It catalyses the reaction uridine(54) in tRNA + (6R)-5,10-methylene-5,6,7,8-tetrahydrofolate + NADH + H(+) = 5-methyluridine(54) in tRNA + (6S)-5,6,7,8-tetrahydrofolate + NAD(+). The catalysed reaction is uridine(54) in tRNA + (6R)-5,10-methylene-5,6,7,8-tetrahydrofolate + NADPH + H(+) = 5-methyluridine(54) in tRNA + (6S)-5,6,7,8-tetrahydrofolate + NADP(+). Functionally, catalyzes the folate-dependent formation of 5-methyl-uridine at position 54 (M-5-U54) in all tRNAs. This chain is Methylenetetrahydrofolate--tRNA-(uracil-5-)-methyltransferase TrmFO 1, found in Mycoplasma mycoides subsp. mycoides SC (strain CCUG 32753 / NCTC 10114 / PG1).